We begin with the raw amino-acid sequence, 293 residues long: Epimerase family protein SDR39U1 (293 aa).

NADP(+) contacts are provided by residues 31–32 (SR), 58–59 (LA), glutamate 77, arginine 82, and valine 160.

It belongs to the NAD(P)-dependent epimerase/dehydratase family. SDR39U1 subfamily. In terms of tissue distribution, expressed in adrenal gland.

Its function is as follows. Putative NADP-dependent oxidoreductase. The polypeptide is Epimerase family protein SDR39U1 (SDR39U1) (Homo sapiens (Human)).